The following is a 445-amino-acid chain: Glycine--tRNA ligase (445 aa).

Substrate-binding residues include R97 and E145. ATP-binding positions include R177 to E179, F187 to F192, E262 to V263, and G308 to R311. F192–E196 contributes to the substrate binding site. E304–G308 provides a ligand contact to substrate.

Belongs to the class-II aminoacyl-tRNA synthetase family. As to quaternary structure, homodimer.

It is found in the cytoplasm. The catalysed reaction is tRNA(Gly) + glycine + ATP = glycyl-tRNA(Gly) + AMP + diphosphate. In terms of biological role, catalyzes the attachment of glycine to tRNA(Gly). The sequence is that of Glycine--tRNA ligase from Borreliella burgdorferi (strain ZS7) (Borrelia burgdorferi).